Reading from the N-terminus, the 201-residue chain is Probable nicotinate-nucleotide adenylyltransferase (201 aa).

The protein belongs to the NadD family.

It catalyses the reaction nicotinate beta-D-ribonucleotide + ATP + H(+) = deamido-NAD(+) + diphosphate. It participates in cofactor biosynthesis; NAD(+) biosynthesis; deamido-NAD(+) from nicotinate D-ribonucleotide: step 1/1. Catalyzes the reversible adenylation of nicotinate mononucleotide (NaMN) to nicotinic acid adenine dinucleotide (NaAD). This Carboxydothermus hydrogenoformans (strain ATCC BAA-161 / DSM 6008 / Z-2901) protein is Probable nicotinate-nucleotide adenylyltransferase.